We begin with the raw amino-acid sequence, 119 residues long: Large ribosomal subunit protein bL19 (119 aa).

Belongs to the bacterial ribosomal protein bL19 family.

In terms of biological role, this protein is located at the 30S-50S ribosomal subunit interface and may play a role in the structure and function of the aminoacyl-tRNA binding site. In Idiomarina loihiensis (strain ATCC BAA-735 / DSM 15497 / L2-TR), this protein is Large ribosomal subunit protein bL19.